The sequence spans 591 residues: Aspartate--tRNA ligase (591 aa).

An L-aspartate-binding site is contributed by Glu173. The tract at residues Gln197–Lys200 is aspartate. Residue Arg219 coordinates L-aspartate. Residues Arg219 to Glu221 and Gln228 contribute to the ATP site. L-aspartate is bound at residue His448. Glu482 contacts ATP. Arg489 is a binding site for L-aspartate. Position 534 to 537 (Gly534 to Arg537) interacts with ATP.

It belongs to the class-II aminoacyl-tRNA synthetase family. Type 1 subfamily. In terms of assembly, homodimer.

The protein resides in the cytoplasm. It carries out the reaction tRNA(Asp) + L-aspartate + ATP = L-aspartyl-tRNA(Asp) + AMP + diphosphate. Catalyzes the attachment of L-aspartate to tRNA(Asp) in a two-step reaction: L-aspartate is first activated by ATP to form Asp-AMP and then transferred to the acceptor end of tRNA(Asp). This Shewanella sp. (strain MR-7) protein is Aspartate--tRNA ligase.